The chain runs to 212 residues: Translation initiation factor IF-3 (212 aa).

The tract at residues 171 to 212 is disordered; the sequence is PKSASKKGHTPPKTQVEASKQANESAETEEEKKRCHPTKPVL. The span at 182–195 shows a compositional bias: polar residues; the sequence is PKTQVEASKQANES.

It belongs to the IF-3 family. In terms of assembly, monomer.

It localises to the cytoplasm. In terms of biological role, IF-3 binds to the 30S ribosomal subunit and shifts the equilibrium between 70S ribosomes and their 50S and 30S subunits in favor of the free subunits, thus enhancing the availability of 30S subunits on which protein synthesis initiation begins. This Porphyromonas gingivalis (strain ATCC 33277 / DSM 20709 / CIP 103683 / JCM 12257 / NCTC 11834 / 2561) protein is Translation initiation factor IF-3.